A 198-amino-acid polypeptide reads, in one-letter code: Nucleoid occlusion factor SlmA (198 aa).

Positions 9-70 constitute an HTH tetR-type domain; it reads RNRREEILQA…SLIEFIEDSL (62 aa). The segment at residues 33 to 52 is a DNA-binding region (H-T-H motif); the sequence is TTAKLAANVGVSEAALYRHF. A coiled-coil region spans residues 119 to 144; that stretch reads DRLQGRINQLFERIEMQLRQVLREKK.

It belongs to the nucleoid occlusion factor SlmA family. Homodimer. Interacts with FtsZ.

The protein localises to the cytoplasm. It localises to the nucleoid. Its function is as follows. Required for nucleoid occlusion (NO) phenomenon, which prevents Z-ring formation and cell division over the nucleoid. Acts as a DNA-associated cell division inhibitor that binds simultaneously chromosomal DNA and FtsZ, and disrupts the assembly of FtsZ polymers. SlmA-DNA-binding sequences (SBS) are dispersed on non-Ter regions of the chromosome, preventing FtsZ polymerization at these regions. This chain is Nucleoid occlusion factor SlmA, found in Yersinia pseudotuberculosis serotype I (strain IP32953).